A 251-amino-acid polypeptide reads, in one-letter code: POU class 2 homeobox associating factor 3 (251 aa).

An OCA domain is found at 5 to 27 (PKVYQGVRVKITVKELLQQRRAH). The tract at residues 24 to 45 (RRAHQAASGGTRSGGSSVHLSD) is disordered. Residues 31–40 (SGGTRSGGSS) show a composition bias toward low complexity.

This sequence belongs to the POU2AF family. Interacts with POU2F3 in a DNA-dependent manner; this interaction increases POU2F3 transactivation activity. In terms of tissue distribution, expressed in many cell types of epithelial, mesenchymal and hematopoietic origins. Expressed in tufs cells.

It is found in the cytoplasm. Its subcellular location is the nucleus. Transcriptional coactivator that specifically associates with POU2F3. This complex drives the development of tuft cells, a rare a rare chemosensory cells that coordinate immune and neural functions within mucosal epithelial tissues. The protein is POU class 2 homeobox associating factor 3 of Homo sapiens (Human).